Reading from the N-terminus, the 206-residue chain is Protein Nef (206 aa).

A disordered region spans residues 1 to 46 (MGNKWSKCSTVGRPAIRERMRRAPAAEGVGPASQDSDKYGALTSSS). Gly-2 carries the N-myristoyl glycine; by host lipid modification. Ser-6 bears the Phosphoserine; by host mark. An acidic; interacts with host PACS1 and PACS2; stabilizes the interaction of NEF/MHC-I with host AP1M1; necessary for MHC-I internalization region spans residues 61 to 65 (QEEEE). An SH3-binding; interaction with Src family tyrosine kinases region spans residues 69–78 (PVRPQVPLRP). Residues 72 to 75 (PQVP) carry the PxxP; stabilizes the interaction of NEF/MHC-I with host AP1M1; necessary for MHC-I internalization motif. The segment at 108–124 (DILDLWVYNTQGYFPDW) is mediates dimerization, Nef-PTE1 interaction. The interval 148–180 (VDPREVEEANTGENNSLLHPMSLHGMEDSHREV) is binding to ATP6V1H. The Dileucine internalization motif; necessary for CD4 internalization signature appears at 164-165 (LL). The Diacidic; necessary for CD4 internalization motif lies at 174-175 (ED).

This sequence belongs to the lentivirus primate group Nef protein family. Monomer; cytosolic form. Homodimer; membrane bound form. Interacts with Nef associated p21-activated kinase (PAK2); this interaction activates PAK2. Associates with the Nef-MHC-I-AP1 complex; this complex is required for MHC-I internalization. Interacts (via C-terminus) with host PI3-kinase. Interacts with host PACS1; this interaction seems to be weak. Interacts with host PACS2. Interacts with host LCK and MAPK3; these interactions inhibit the kinase activity of the latter. Interacts with host ATP6V1H; this interaction may play a role in CD4 endocytosis. Associates with the CD4-Nef-AP2 complex; this complex is required for CD4 internalization. Interacts with host AP2 subunit alpha and AP2 subunit sigma2. Interacts with TCR-zeta chain; this interaction up-regulates the Fas ligand (FasL) surface expression. Interacts with host HCK, LYN, and SRC; these interactions activate the Src family kinases. Interacts with MAP3K5; this interaction inhibits the Fas and TNFR-mediated death signals. Interacts with beta-COP and PTE1. Interacts with human RACK1; this increases Nef phosphorylation by PKC. Interacts with TP53; this interaction decreases the half-life of TP53, protecting the infected cell against p53-mediated apoptosis. In terms of processing, the virion-associated Nef proteins are cleaved by the viral protease to release the soluble C-terminal core protein. Nef is probably cleaved concomitantly with viral structural proteins on maturation of virus particles. Post-translationally, myristoylated. Phosphorylated on serine residues, probably by host PKCdelta and theta.

It is found in the host cell membrane. The protein localises to the virion. The protein resides in the secreted. It localises to the host Golgi apparatus membrane. Functionally, factor of infectivity and pathogenicity, required for optimal virus replication. Alters numerous pathways of T-lymphocyte function and down-regulates immunity surface molecules in order to evade host defense and increase viral infectivity. Alters the functionality of other immunity cells, like dendritic cells, monocytes/macrophages and NK cells. In infected CD4(+) T-lymphocytes, down-regulates the surface MHC-I, mature MHC-II, CD4, CD28, CCR5 and CXCR4 molecules. Mediates internalization and degradation of host CD4 through the interaction of with the cytoplasmic tail of CD4, the recruitment of AP-2 (clathrin adapter protein complex 2), internalization through clathrin coated pits, and subsequent transport to endosomes and lysosomes for degradation. Diverts host MHC-I molecules to the trans-Golgi network-associated endosomal compartments by an endocytic pathway to finally target them for degradation. MHC-I down-regulation may involve AP-1 (clathrin adapter protein complex 1) or possibly Src family kinase-ZAP70/Syk-PI3K cascade recruited by PACS2. In consequence infected cells are masked for immune recognition by cytotoxic T-lymphocytes. Decreasing the number of immune receptors also prevents reinfection by more HIV particles (superinfection). Down-regulates host SERINC3 and SERINC5 thereby excluding these proteins from the viral particles. Virion infectivity is drastically higher when SERINC3 or SERINC5 are excluded from the viral envelope, because these host antiviral proteins impair the membrane fusion event necessary for subsequent virion penetration. In terms of biological role, bypasses host T-cell signaling by inducing a transcriptional program nearly identical to that of anti-CD3 cell activation. Interaction with TCR-zeta chain up-regulates the Fas ligand (FasL). Increasing surface FasL molecules and decreasing surface MHC-I molecules on infected CD4(+) cells send attacking cytotoxic CD8+ T-lymphocytes into apoptosis. Its function is as follows. Plays a role in optimizing the host cell environment for viral replication without causing cell death by apoptosis. Protects the infected cells from apoptosis in order to keep them alive until the next virus generation is ready to strike. Inhibits the Fas and TNFR-mediated death signals by blocking MAP3K5/ASK1. Decreases the half-life of TP53, protecting the infected cell against p53-mediated apoptosis. Inhibits the apoptotic signals regulated by the Bcl-2 family proteins through the formation of a Nef/PI3-kinase/PAK2 complex that leads to activation of PAK2 and induces phosphorylation of host BAD. Functionally, extracellular Nef protein targets CD4(+) T-lymphocytes for apoptosis by interacting with CXCR4 surface receptors. This chain is Protein Nef, found in Human immunodeficiency virus type 1 group M subtype C (isolate 92BR025) (HIV-1).